The sequence spans 73 residues: MAKEEAIEKDGEVIEALPNAQFRVRLENGHEILGLLSGKMRMNYIKILPGDRVKVEMSPYDLSKGRIVYRYKN.

The region spanning 1–72 (MAKEEAIEKD…SKGRIVYRYK (72 aa)) is the S1-like domain.

It belongs to the IF-1 family. As to quaternary structure, component of the 30S ribosomal translation pre-initiation complex which assembles on the 30S ribosome in the order IF-2 and IF-3, IF-1 and N-formylmethionyl-tRNA(fMet); mRNA recruitment can occur at any time during PIC assembly.

Its subcellular location is the cytoplasm. In terms of biological role, one of the essential components for the initiation of protein synthesis. Stabilizes the binding of IF-2 and IF-3 on the 30S subunit to which N-formylmethionyl-tRNA(fMet) subsequently binds. Helps modulate mRNA selection, yielding the 30S pre-initiation complex (PIC). Upon addition of the 50S ribosomal subunit IF-1, IF-2 and IF-3 are released leaving the mature 70S translation initiation complex. In Salinibacter ruber (strain DSM 13855 / M31), this protein is Translation initiation factor IF-1.